Here is a 403-residue protein sequence, read N- to C-terminus: Shaggy-related protein kinase GSK4 (403 aa).

One can recognise a Protein kinase domain in the interval 71–355; sequence YMAERVVGTG…ALEACAHSFF (285 aa). Residues 77 to 85 and Lys100 each bind ATP; that span reads VGTGSFGVV. Asp196 acts as the Proton acceptor in catalysis.

This sequence belongs to the protein kinase superfamily. CMGC Ser/Thr protein kinase family. GSK-3 subfamily. As to quaternary structure, interacts with LIC.

The enzyme catalyses L-seryl-[protein] + ATP = O-phospho-L-seryl-[protein] + ADP + H(+). It carries out the reaction L-threonyl-[protein] + ATP = O-phospho-L-threonyl-[protein] + ADP + H(+). Its function is as follows. Probable serine-threonine kinase that may regulate brassinosteroid signaling. The chain is Shaggy-related protein kinase GSK4 from Oryza sativa subsp. japonica (Rice).